We begin with the raw amino-acid sequence, 449 residues long: XK-related protein 2 (449 aa).

The next 10 membrane-spanning stretches (helical) occupy residues 35 to 55, 68 to 88, 98 to 118, 174 to 194, 204 to 224, 241 to 261, 269 to 289, 306 to 326, 357 to 377, and 382 to 402; these read FSIL…LYMV, TYTF…LIFV, LSLF…EAMI, IQAF…SLIS, LMAF…MLAI, LCIT…LVLF, AVPF…VKFW, VGTL…NFSC, LVEN…VLLN, and LIAV…LLFF.

The protein belongs to the XK family.

It is found in the membrane. This Mus musculus (Mouse) protein is XK-related protein 2 (Xkrx).